We begin with the raw amino-acid sequence, 773 residues long: Leucine-rich repeat-containing protein let-4 (773 aa).

The first 20 residues, 1–20 (MRLLLCLLLFSTLLINSTNA), serve as a signal peptide directing secretion. Topologically, residues 21 to 689 (CPGVITQACF…RLEKSFFTTT (669 aa)) are extracellular. LRR repeat units follow at residues 61-84 (VGLI…FFSG), 85-107 (LFIR…AFAG), 109-132 (NPVL…ALAG), 133-157 (LPNL…IFPN), 159-181 (NKLY…TFQN), 183-206 (KNSI…AIRG), 207-230 (LKQL…NFLN), 231-254 (LPVL…AFLN), 256-278 (PSLR…QFQT), 279-302 (FEQL…SLSG), 303-326 (LKQL…AFTN), 328-349 (SIVV…IISG), 350-373 (LPNL…AFYD), 375-397 (ASLV…TFLA), 399-421 (LNLL…AFNS), and 486-516 (LVQI…AFQQ). The chain crosses the membrane as a helical span at residues 690–710 (IIFICVGTAVIVLVVVIAGLC). Topologically, residues 711 to 773 (ISKHRQLQFE…PGSSYCNYYK (63 aa)) are cytoplasmic.

In terms of tissue distribution, in L1 larvae, expressed in a subset of epithelial cells including epidermal, vulval and rectal cells and the excretory duct and pore. Absent from internal epithelia such as the gut and pharyngeal tubes. Transiently expressed in the excretory canal cell at the 1.5-fold embryonic stage but no longer visible in this cell at hatching.

It is found in the apical cell membrane. In terms of biological role, required for apical extracellular matrix organization and epithelial junction maintenance. This is Leucine-rich repeat-containing protein let-4 (let-4) from Caenorhabditis elegans.